We begin with the raw amino-acid sequence, 500 residues long: POU domain, class 3, transcription factor 3 (500 aa).

Over residues 32 to 52 (GGGGGGGGGGGGAGGGGGGMQ) the composition is skewed to gly residues. Disordered stretches follow at residues 32 to 63 (GGGGGGGGGGGGAGGGGGGMQPGSAAVTSGAY), 122 to 190 (WSGS…WGAA), 231 to 319 (NGML…TPTS), and 461 to 500 (EKRMTPPGIQQQTPDDVYSQVGTVSADTPPPHHGLQTSVQ). Composition is skewed to pro residues over residues 134–146 (QQPPQPPPPPPQG) and 171–181 (HLGPPPPPPHQ). Residues 241-251 (GGGGGGAGGGA) show a composition bias toward gly residues. Positions 270–287 (HHHHHHHHAHPHPPHPHH) are enriched in basic residues. Gly residues predominate over residues 293-303 (HHGGGGGGAGP). The region spanning 314-388 (EDTPTSDDLE…LLNKWLEEAD (75 aa)) is the POU-specific domain. Residues 406 to 465 (KRKKRTSIEVSVKGALESHFLKCPKPSAQEITNLADSLQLEKEVVRVWFCNRRQKEKRMT) constitute a DNA-binding region (homeobox). The span at 468 to 486 (GIQQQTPDDVYSQVGTVSA) shows a compositional bias: polar residues.

The protein belongs to the POU transcription factor family. Class-3 subfamily. As to quaternary structure, homodimer. As to expression, brain.

It is found in the nucleus. Its function is as follows. Transcription factor that acts synergistically with SOX11 and SOX4. Plays a role in neuronal development. Is implicated in an enhancer activity at the embryonic met-mesencephalic junction; the enhancer element contains the octamer motif (5'-ATTTGCAT-3'). The sequence is that of POU domain, class 3, transcription factor 3 from Homo sapiens (Human).